The sequence spans 235 residues: Keratin-associated protein 4-16 (235 aa).

The interval 1 to 132 (MCSSKMPCSP…CCCPCCCLRP (132 aa)) is 16 X 5 AA repeats of C-C-[GIKRQVHEML]-[SPTRV]-[STVQRCP]. A run of 16 repeats spans residues 23 to 27 (CCHPS), 28 to 32 (CCQTT), 33 to 37 (CCRTT), 48 to 52 (CCRPQ), 53 to 57 (CCHSV), 58 to 62 (CCQPT), 63 to 67 (CCRPS), 68 to 72 (CCQTT), 78 to 82 (CCHPS), 83 to 87 (CCVSS), 88 to 92 (CCRPQ), 93 to 97 (CCHSV), 103 to 107 (CCHPS), 108 to 112 (CCISS), 118 to 122 (CCESS), and 128 to 132 (CCLRP). Residues 203-224 (SPSPSLPSLSPPLPSPPLPSPH) show a composition bias toward pro residues. The segment at 203-235 (SPSPSLPSLSPPLPSPPLPSPHFPSVNPKSMLQ) is disordered.

This sequence belongs to the KRTAP type 4 family. In terms of assembly, interacts with hair keratins.

In the hair cortex, hair keratin intermediate filaments are embedded in an interfilamentous matrix, consisting of hair keratin-associated proteins (KRTAP), which are essential for the formation of a rigid and resistant hair shaft through their extensive disulfide bond cross-linking with abundant cysteine residues of hair keratins. The matrix proteins include the high-sulfur and high-glycine-tyrosine keratins. In Homo sapiens (Human), this protein is Keratin-associated protein 4-16.